Consider the following 145-residue polypeptide: Immunoglobulin iota chain (145 aa).

Positions 1–19 (MSWAPVLLMLFVYCTGCGP) are cleaved as a signal peptide. The interval 20–41 (QPVLHQPPAMSSALGTTIRLTC) is framework-1. Residues 20–132 (QPVLHQPPAM…EKEEREREWE (113 aa)) form the Ig-like V-type domain. A disulfide bridge connects residues Cys-41 and Cys-115. The interval 42 to 56 (TLRNDHDIGVYSVYW) is complementarity-determining-1. Residues 57 to 70 (YQQRPGHPPRFLLR) form a framework-2 region. The complementarity-determining-2 stretch occupies residues 71–81 (YFSQSDKSQGP). The interval 82–115 (QVPPRFSGSKDVARNRGYLSISELQPEDEAMYYC) is framework-3. Residues 121–130 (SSEKEERERE) show a composition bias toward basic and acidic residues. Positions 121–145 (SSEKEEREREWEEEMEPTAARTRVP) are disordered.

The protein belongs to the immunoglobulin superfamily. As to quaternary structure, interacts with IGLL1. Interacts with SYNV1/HRD1 (via N-terminus); this interaction leads to increased VPREB1 ubiquitination and degradation in pre-B cells, possibly through a lysosomal, not proteasomal, pathway. As to expression, only expressed by pre-B-cells.

Its subcellular location is the endoplasmic reticulum. Functionally, associates with the Ig-mu chain to form a molecular complex that is expressed on the surface of pre-B-cells. This complex presumably regulates Ig gene rearrangements in the early steps of B-cell differentiation. The protein is Immunoglobulin iota chain (VPREB1) of Homo sapiens (Human).